The chain runs to 92 residues: MKYGVLFMVSCGVMFLILSHVEEVEAMKKFGCNTTHPFPGKCGNNGKSSWVSDMKKLPSAPKNRDIRCECSDRPSLARGMPGERVCRCDYDC.

A signal peptide spans M1–A26. Cystine bridges form between C32–C92, C42–C70, and C68–C88.

This sequence belongs to the DEFL family.

The protein resides in the secreted. The sequence is that of Putative defensin-like protein 225 (SCRL1) from Arabidopsis thaliana (Mouse-ear cress).